The chain runs to 460 residues: tRNA modification GTPase MnmE (460 aa).

(6S)-5-formyl-5,6,7,8-tetrahydrofolate-binding residues include R22, E83, and K122. The region spanning 219–381 (GIKTLIIGRP…LQQTILKKFQ (163 aa)) is the TrmE-type G domain. N229 contributes to the K(+) binding site. Residues 229–234 (NVGKSS), 248–254 (SDISGTT), and 273–276 (DTAG) each bind GTP. S233 serves as a coordination point for Mg(2+). K(+) contacts are provided by S248, I250, and T253. T254 lines the Mg(2+) pocket. Residue K460 participates in (6S)-5-formyl-5,6,7,8-tetrahydrofolate binding.

Belongs to the TRAFAC class TrmE-Era-EngA-EngB-Septin-like GTPase superfamily. TrmE GTPase family. In terms of assembly, homodimer. Heterotetramer of two MnmE and two MnmG subunits. Requires K(+) as cofactor.

It localises to the cytoplasm. Functionally, exhibits a very high intrinsic GTPase hydrolysis rate. Involved in the addition of a carboxymethylaminomethyl (cmnm) group at the wobble position (U34) of certain tRNAs, forming tRNA-cmnm(5)s(2)U34. The chain is tRNA modification GTPase MnmE from Aster yellows witches'-broom phytoplasma (strain AYWB).